The sequence spans 316 residues: 4-hydroxyphenylacetate decarboxylase activating enzyme (316 aa).

The region spanning 20–307 is the Radical SAM core domain; sequence HDGPGCRTTV…QDIFLDNGIA (288 aa). C34, C38, C41, C60, C66, C69, and C105 together coordinate [4Fe-4S] cluster. An S-adenosyl-L-methionine-binding site is contributed by 40–42; it reads WCA. The 32-residue stretch at 84 to 115 folds into the 4Fe-4S ferredoxin-type domain; it reads NKPVIDWNICKDCESFECVNSCYYNAFKLCAK. S-adenosyl-L-methionine-binding positions include G144, 193–195, and H267; that span reads DIK.

This sequence belongs to the organic radical-activating enzymes family. In terms of assembly, monomer. The cofactor is [4Fe-4S] cluster.

The catalysed reaction is glycyl-[protein] + reduced [flavodoxin] + S-adenosyl-L-methionine = glycin-2-yl radical-[protein] + semiquinone [flavodoxin] + 5'-deoxyadenosine + L-methionine + H(+). Its function is as follows. Catalyzes activation of 4-hydroxyphenylacetate decarboxylase under anaerobic conditions by generation of an organic free radical on a glycine residue, via a homolytic cleavage of S-adenosyl-L-methionine (SAM). The sequence is that of 4-hydroxyphenylacetate decarboxylase activating enzyme from Clostridioides difficile (Peptoclostridium difficile).